The primary structure comprises 399 residues: Putative 8-amino-7-oxononanoate synthase (399 aa).

Arg-23 provides a ligand contact to substrate. Gly-110–Tyr-111 is a pyridoxal 5'-phosphate binding site. Residue His-135 participates in substrate binding. Pyridoxal 5'-phosphate-binding positions include Ser-183, Asp-208–His-211, and Thr-239–Lys-242. Lys-242 is subject to N6-(pyridoxal phosphate)lysine. Residue Thr-364 participates in substrate binding.

This sequence belongs to the class-II pyridoxal-phosphate-dependent aminotransferase family. BioF subfamily. Homodimer. Requires pyridoxal 5'-phosphate as cofactor.

The enzyme catalyses 6-carboxyhexanoyl-[ACP] + L-alanine + H(+) = (8S)-8-amino-7-oxononanoate + holo-[ACP] + CO2. It functions in the pathway cofactor biosynthesis; biotin biosynthesis. In terms of biological role, catalyzes the decarboxylative condensation of pimeloyl-[acyl-carrier protein] and L-alanine to produce 8-amino-7-oxononanoate (AON), [acyl-carrier protein], and carbon dioxide. This is Putative 8-amino-7-oxononanoate synthase (bioF) from Cyanothece sp. (strain PCC 7425 / ATCC 29141).